The primary structure comprises 66 residues: Large ribosomal subunit protein bL28 (66 aa).

Belongs to the bacterial ribosomal protein bL28 family.

This is Large ribosomal subunit protein bL28 from Oenococcus oeni (strain ATCC BAA-331 / PSU-1).